A 586-amino-acid chain; its full sequence is MSPNPQWDVPRALRVARLFHLVCGVRDACVTPFLTLYLRQLGVAAPLVGILMGTKHLIATCWIPFCAFLAKRYQKRRMFLTGSLLSSAGASLLMVLVPPVDRNLVNHFCNGSSRVATTILPLGVTQTVIMTPTQGSGAPNLPGSRHTRALDTSGFPNGSEGTFSGLQTYLVGSVEGARTTTQGLHLVTSGLRDNSQKGTFEVGNVTLNLLPGSTALGGPVNLSKPQGDTQTPDHSSKGSPWTFILSLGVVVFWELLAAPLEQVADDSLYEYLDFVDATDRNRDLWVWKLLGVSAGVCGIAALVGHLECLLVANGPQGVIYFYSYSLVSTLALAVSTAFPVPIDQQQGPSYKAIKALSLIRGDSRLILLAFTVFWIGATASTVQDFLFWHMKDHGSSELVMGFSVALSLLGEILFHPFRTSLLRKLSRVGVLGLGLGCLALQVLYYAFIWSWWSVLPVQILSTISSGALWWAVGASIEDLAFSGMERSLGTMFRGHFYGSGCSLGSFVGGFVVLHFGIAVLYEACCVVLLLWLALFLSIQPRLPQEQRINYSKLLAMGGSDSSDSEQGSEGDWLVKAMREEHSDWKG.

The next 2 helical transmembrane spans lie at 50–70 and 78–98; these read ILMG…AFLA and MFLT…VLVP. The interval 218–237 is disordered; that stretch reads GPVNLSKPQGDTQTPDHSSK. Residues 223–237 show a composition bias toward polar residues; it reads SKPQGDTQTPDHSSK. 9 helical membrane-spanning segments follow: residues 240 to 260, 284 to 304, 318 to 338, 365 to 385, 397 to 417, 428 to 448, 454 to 474, 494 to 514, and 519 to 538; these read PWTF…AAPL, LWVW…ALVG, VIYF…STAF, LILL…VQDF, ELVM…FHPF, VGVL…YAFI, VLPV…AVGA, GHFY…VVLH, and VLYE…FLSI.

The protein belongs to the major facilitator superfamily. MFSD6 family.

It is found in the membrane. The protein is Major facilitator superfamily domain-containing protein 6-like (Mfsd6l) of Mus musculus (Mouse).